Consider the following 167-residue polypeptide: Bacterial non-heme ferritin (167 aa).

The region spanning 1–145 is the Ferritin-like diiron domain; that stretch reads MLSKEVVKLL…GIVDKIKLIG (145 aa). E17, E50, H53, E94, and Q127 together coordinate Fe cation.

This sequence belongs to the ferritin family. Prokaryotic subfamily. Homooligomer of 24 subunits that assemble into a spherical protein shell (12 +/- 1 nM diameter) that can sequester at least 2000 iron atoms.

It localises to the cytoplasm. The enzyme catalyses 4 Fe(2+) + O2 + 6 H2O = 4 iron(III) oxide-hydroxide + 12 H(+). Its function is as follows. Iron-storage protein. The protein is Bacterial non-heme ferritin (ftn) of Campylobacter jejuni subsp. jejuni serotype O:2 (strain ATCC 700819 / NCTC 11168).